A 611-amino-acid polypeptide reads, in one-letter code: Chaperone protein DnaK (611 aa).

The residue at position 173 (T173) is a Phosphothreonine; by autocatalysis. Positions 577–591 are enriched in low complexity; sequence AAAAQAAQGGEADAG. Positions 577 to 611 are disordered; that stretch reads AAAAQAAQGGEADAGAGKKDDGVVDADFEEVKDDK. The span at 599-611 shows a compositional bias: acidic residues; the sequence is VVDADFEEVKDDK.

It belongs to the heat shock protein 70 family.

In terms of biological role, acts as a chaperone. This Lysinibacillus sphaericus (strain C3-41) protein is Chaperone protein DnaK.